Here is a 443-residue protein sequence, read N- to C-terminus: Ribosomal protein uS12 methylthiotransferase RimO (443 aa).

In terms of domain architecture, MTTase N-terminal spans 5-115 (PNIGFISLGC…VMKHVHKYVP (111 aa)). C14, C50, C79, C147, C151, and C154 together coordinate [4Fe-4S] cluster. One can recognise a Radical SAM core domain in the interval 133 to 374 (LTPKHYAYLK…MQVQQRISAA (242 aa)). The 67-residue stretch at 377 to 443 (QQKVGKTLAV…ADEYDLWGTC (67 aa)) folds into the TRAM domain.

Belongs to the methylthiotransferase family. RimO subfamily. The cofactor is [4Fe-4S] cluster.

It is found in the cytoplasm. The enzyme catalyses L-aspartate(89)-[ribosomal protein uS12]-hydrogen + (sulfur carrier)-SH + AH2 + 2 S-adenosyl-L-methionine = 3-methylsulfanyl-L-aspartate(89)-[ribosomal protein uS12]-hydrogen + (sulfur carrier)-H + 5'-deoxyadenosine + L-methionine + A + S-adenosyl-L-homocysteine + 2 H(+). Its function is as follows. Catalyzes the methylthiolation of an aspartic acid residue of ribosomal protein uS12. The chain is Ribosomal protein uS12 methylthiotransferase RimO from Actinobacillus pleuropneumoniae serotype 5b (strain L20).